The chain runs to 310 residues: Probable cell division protein WhiA (310 aa).

Residues serine 274–lysine 308 constitute a DNA-binding region (H-T-H motif).

The protein belongs to the WhiA family.

In terms of biological role, involved in cell division and chromosome segregation. This is Probable cell division protein WhiA from Lactiplantibacillus plantarum (strain ATCC BAA-793 / NCIMB 8826 / WCFS1) (Lactobacillus plantarum).